The sequence spans 306 residues: Tryptophan 2,3-dioxygenase (306 aa).

Residues 75–79 (FIIQH), Tyr-137, and Arg-141 each bind substrate. A heme-binding site is contributed by His-264. Residue Thr-278 participates in substrate binding.

It belongs to the tryptophan 2,3-dioxygenase family. Homotetramer. Heme serves as cofactor.

It carries out the reaction L-tryptophan + O2 = N-formyl-L-kynurenine. It functions in the pathway amino-acid degradation; L-tryptophan degradation via kynurenine pathway; L-kynurenine from L-tryptophan: step 1/2. Heme-dependent dioxygenase that catalyzes the oxidative cleavage of the L-tryptophan (L-Trp) pyrrole ring and converts L-tryptophan to N-formyl-L-kynurenine. Catalyzes the oxidative cleavage of the indole moiety. The sequence is that of Tryptophan 2,3-dioxygenase from Paraburkholderia phytofirmans (strain DSM 17436 / LMG 22146 / PsJN) (Burkholderia phytofirmans).